Consider the following 310-residue polypeptide: GTPase Era (310 aa).

The Era-type G domain occupies 17 to 184 (HSGFVALIGA…LDYLAQALPA (168 aa)). The interval 25-32 (GAPNAGKS) is G1. 25–32 (GAPNAGKS) provides a ligand contact to GTP. The interval 51–55 (QTTRA) is G2. Residues 72 to 75 (DTPG) are G3. Residues 72–76 (DTPGI) and 134–137 (NKVD) each bind GTP. The interval 134 to 137 (NKVD) is G4. Residues 163–165 (VSA) are G5. The 78-residue stretch at 215–292 (LHQELPYSSH…HLFLFVKVRE (78 aa)) folds into the KH type-2 domain.

The protein belongs to the TRAFAC class TrmE-Era-EngA-EngB-Septin-like GTPase superfamily. Era GTPase family. In terms of assembly, monomer.

It is found in the cytoplasm. The protein localises to the cell inner membrane. Functionally, an essential GTPase that binds both GDP and GTP, with rapid nucleotide exchange. Plays a role in 16S rRNA processing and 30S ribosomal subunit biogenesis and possibly also in cell cycle regulation and energy metabolism. The sequence is that of GTPase Era from Mesorhizobium japonicum (strain LMG 29417 / CECT 9101 / MAFF 303099) (Mesorhizobium loti (strain MAFF 303099)).